The primary structure comprises 349 residues: Sperm acrosomal protein FSA-ACR.1 (349 aa).

The N-terminal stretch at 1 to 8 (MKEVYLVG) is a signal peptide. Residues 1-265 (MKEVYLVGYA…EQPSGIPPSS (265 aa)) form a disordered region. Residues 63 to 114 (TSGEHTSVEHASAEHSSTEHTSGEHASGEHTSGERATGEHTSSEHATSEHTS) are compositionally biased toward basic and acidic residues. Polar residues-rich tracts occupy residues 117–142 (QPSGEQPSGEKSSGEQPSGEKSSGEQ) and 154–171 (SGEQSSGEKSSAEQTSGE). A compositionally biased stretch (basic and acidic residues) spans 178–189 (PSGEHAVAEKPS). The segment covering 221–248 (EQASIEKASSEQASAEQASAEQASSEQA) has biased composition (low complexity). The N-linked (GlcNAc...) asparagine glycan is linked to Asn342.

To acrosomal proteins SP-10. Testis.

It is found in the cytoplasmic vesicle. It localises to the secretory vesicle. Its subcellular location is the acrosome. The protein is Sperm acrosomal protein FSA-ACR.1 of Vulpes vulpes (Red fox).